The primary structure comprises 674 residues: DNA ligase (674 aa).

Residues 31 to 35 (DYEYD), 80 to 81 (SL), and Glu110 contribute to the NAD(+) site. Lys112 serves as the catalytic N6-AMP-lysine intermediate. 4 residues coordinate NAD(+): Arg133, Glu167, Lys283, and Lys307. The Zn(2+) site is built by Cys401, Cys404, Cys419, and Cys424. Positions 584 to 673 (KVEKIFEGMK…SKDEVKAVLE (90 aa)) constitute a BRCT domain.

The protein belongs to the NAD-dependent DNA ligase family. LigA subfamily. The cofactor is Mg(2+). Requires Mn(2+) as cofactor.

It catalyses the reaction NAD(+) + (deoxyribonucleotide)n-3'-hydroxyl + 5'-phospho-(deoxyribonucleotide)m = (deoxyribonucleotide)n+m + AMP + beta-nicotinamide D-nucleotide.. In terms of biological role, DNA ligase that catalyzes the formation of phosphodiester linkages between 5'-phosphoryl and 3'-hydroxyl groups in double-stranded DNA using NAD as a coenzyme and as the energy source for the reaction. It is essential for DNA replication and repair of damaged DNA. The protein is DNA ligase of Clostridioides difficile (strain 630) (Peptoclostridium difficile).